We begin with the raw amino-acid sequence, 643 residues long: Threonine--tRNA ligase (643 aa).

In terms of domain architecture, TGS spans Met1–Tyr61. Residues Asp244–Pro535 are catalytic. 3 residues coordinate Zn(2+): Cys335, His386, and His512.

This sequence belongs to the class-II aminoacyl-tRNA synthetase family. As to quaternary structure, homodimer. It depends on Zn(2+) as a cofactor.

It localises to the cytoplasm. It catalyses the reaction tRNA(Thr) + L-threonine + ATP = L-threonyl-tRNA(Thr) + AMP + diphosphate + H(+). Functionally, catalyzes the attachment of threonine to tRNA(Thr) in a two-step reaction: L-threonine is first activated by ATP to form Thr-AMP and then transferred to the acceptor end of tRNA(Thr). Also edits incorrectly charged L-seryl-tRNA(Thr). The chain is Threonine--tRNA ligase from Buchnera aphidicola subsp. Baizongia pistaciae (strain Bp).